Consider the following 321-residue polypeptide: Mitochondrial coenzyme A transporter SLC25A42 (321 aa).

Solcar repeat units follow at residues 33–119 (RSVL…YKGI), 131–216 (LPPV…LKKT), and 226–314 (PFPY…TQIL). 6 consecutive transmembrane segments (helical) span residues 35–55 (VLNS…AVAP), 91–111 (LWRG…IQFC), 137–154 (LLAG…TYPL), 191–208 (GFTP…LSFF), 232–252 (LVFG…LDVV), and 295–315 (VKGP…QILL).

Belongs to the mitochondrial carrier (TC 2.A.29) family.

It is found in the mitochondrion inner membrane. It carries out the reaction ADP(out) + CoA(in) = ADP(in) + CoA(out). It catalyses the reaction 3'-dephospho-CoA(in) + ADP(out) = 3'-dephospho-CoA(out) + ADP(in). The catalysed reaction is adenosine 3',5'-bisphosphate(in) + ADP(out) = adenosine 3',5'-bisphosphate(out) + ADP(in). The enzyme catalyses AMP(in) + ADP(out) = AMP(out) + ADP(in). It carries out the reaction dADP(in) + ADP(out) = dADP(out) + ADP(in). It catalyses the reaction ADP(in) + ATP(out) = ADP(out) + ATP(in). Its function is as follows. Mitochondrial carrier mediating the transport of coenzyme A (CoA) in mitochondria in exchange for intramitochondrial (deoxy)adenine nucleotides and adenosine 3',5'-diphosphate. The polypeptide is Mitochondrial coenzyme A transporter SLC25A42 (slc25a42) (Danio rerio (Zebrafish)).